The primary structure comprises 884 residues: Alanine--tRNA ligase (884 aa).

Residues His-565, His-569, Cys-674, and His-678 each contribute to the Zn(2+) site.

Belongs to the class-II aminoacyl-tRNA synthetase family. Requires Zn(2+) as cofactor.

Its subcellular location is the cytoplasm. It carries out the reaction tRNA(Ala) + L-alanine + ATP = L-alanyl-tRNA(Ala) + AMP + diphosphate. In terms of biological role, catalyzes the attachment of alanine to tRNA(Ala) in a two-step reaction: alanine is first activated by ATP to form Ala-AMP and then transferred to the acceptor end of tRNA(Ala). Also edits incorrectly charged Ser-tRNA(Ala) and Gly-tRNA(Ala) via its editing domain. This chain is Alanine--tRNA ligase, found in Xanthobacter autotrophicus (strain ATCC BAA-1158 / Py2).